Reading from the N-terminus, the 170-residue chain is RNA pyrophosphohydrolase (170 aa).

Residues 6–149 (GFRPNVGIIL…KRDVYRRALK (144 aa)) form the Nudix hydrolase domain. The short motif at 39 to 60 (GGIKHNESPENALYRELEEEVG) is the Nudix box element.

This sequence belongs to the Nudix hydrolase family. RppH subfamily. A divalent metal cation is required as a cofactor.

Functionally, accelerates the degradation of transcripts by removing pyrophosphate from the 5'-end of triphosphorylated RNA, leading to a more labile monophosphorylated state that can stimulate subsequent ribonuclease cleavage. The chain is RNA pyrophosphohydrolase from Saccharophagus degradans (strain 2-40 / ATCC 43961 / DSM 17024).